Reading from the N-terminus, the 352-residue chain is Phenylalanine--tRNA ligase alpha subunit (352 aa).

Position 258 (glutamate 258) interacts with Mg(2+).

The protein belongs to the class-II aminoacyl-tRNA synthetase family. Phe-tRNA synthetase alpha subunit type 1 subfamily. Tetramer of two alpha and two beta subunits. Mg(2+) serves as cofactor.

It localises to the cytoplasm. The catalysed reaction is tRNA(Phe) + L-phenylalanine + ATP = L-phenylalanyl-tRNA(Phe) + AMP + diphosphate + H(+). The protein is Phenylalanine--tRNA ligase alpha subunit of Staphylococcus epidermidis (strain ATCC 35984 / DSM 28319 / BCRC 17069 / CCUG 31568 / BM 3577 / RP62A).